The primary structure comprises 273 residues: Release factor glutamine methyltransferase (273 aa).

Residues 109–113 (GTGSG), aspartate 132, tryptophan 159, and asparagine 176 each bind S-adenosyl-L-methionine. 176 to 179 (NPPY) serves as a coordination point for substrate.

It belongs to the protein N5-glutamine methyltransferase family. PrmC subfamily.

The catalysed reaction is L-glutaminyl-[peptide chain release factor] + S-adenosyl-L-methionine = N(5)-methyl-L-glutaminyl-[peptide chain release factor] + S-adenosyl-L-homocysteine + H(+). Functionally, methylates the class 1 translation termination release factors RF1/PrfA and RF2/PrfB on the glutamine residue of the universally conserved GGQ motif. In Neisseria gonorrhoeae (strain ATCC 700825 / FA 1090), this protein is Release factor glutamine methyltransferase.